The following is a 392-amino-acid chain: Methylthioribose-1-phosphate isomerase (392 aa).

The active-site Proton donor is Asp253.

Belongs to the eIF-2B alpha/beta/delta subunits family. MtnA subfamily.

The protein resides in the cytoplasm. Its subcellular location is the nucleus. The catalysed reaction is 5-(methylsulfanyl)-alpha-D-ribose 1-phosphate = 5-(methylsulfanyl)-D-ribulose 1-phosphate. It participates in amino-acid biosynthesis; L-methionine biosynthesis via salvage pathway; L-methionine from S-methyl-5-thio-alpha-D-ribose 1-phosphate: step 1/6. Functionally, catalyzes the interconversion of methylthioribose-1-phosphate (MTR-1-P) into methylthioribulose-1-phosphate (MTRu-1-P). This is Methylthioribose-1-phosphate isomerase (mri1) from Pyrenophora tritici-repentis (strain Pt-1C-BFP) (Wheat tan spot fungus).